Reading from the N-terminus, the 398-residue chain is uncharacterized protein (398 aa).

The next 6 membrane-spanning stretches (helical) occupy residues 37 to 57 (LVILTIVAFFWGLLGVIFVQF), 92 to 112 (IFNAIFWLTQILFNVPFFIFG), 122 to 142 (LLTLYFVAVSNLFGFFFSYIP), 186 to 206 (LFYGLIWGFLQAVFYSVILII), 228 to 248 (IGGILMLINTVSFIIGYVIGT), and 268 to 288 (FGVAFFLSPNLVFTLLMNIVL).

The protein resides in the cell membrane. This is an uncharacterized protein from Mycoplasma genitalium (strain ATCC 33530 / DSM 19775 / NCTC 10195 / G37) (Mycoplasmoides genitalium).